A 427-amino-acid chain; its full sequence is 3-phosphoshikimate 1-carboxyvinyltransferase (427 aa).

3-phosphoshikimate is bound by residues lysine 20, serine 21, and arginine 25. Lysine 20 is a binding site for phosphoenolpyruvate. Phosphoenolpyruvate is bound by residues glycine 92 and arginine 120. Positions 166, 168, 312, and 339 each coordinate 3-phosphoshikimate. Position 168 (glutamine 168) interacts with phosphoenolpyruvate. Aspartate 312 serves as the catalytic Proton acceptor. Positions 343 and 385 each coordinate phosphoenolpyruvate.

The protein belongs to the EPSP synthase family. In terms of assembly, monomer.

It is found in the cytoplasm. The catalysed reaction is 3-phosphoshikimate + phosphoenolpyruvate = 5-O-(1-carboxyvinyl)-3-phosphoshikimate + phosphate. Its pathway is metabolic intermediate biosynthesis; chorismate biosynthesis; chorismate from D-erythrose 4-phosphate and phosphoenolpyruvate: step 6/7. In terms of biological role, catalyzes the transfer of the enolpyruvyl moiety of phosphoenolpyruvate (PEP) to the 5-hydroxyl of shikimate-3-phosphate (S3P) to produce enolpyruvyl shikimate-3-phosphate and inorganic phosphate. The sequence is that of 3-phosphoshikimate 1-carboxyvinyltransferase from Streptococcus agalactiae serotype III (strain NEM316).